An 858-amino-acid polypeptide reads, in one-letter code: Bifunctional uridylyltransferase/uridylyl-removing enzyme (858 aa).

The segment at 1–324 (MSAHAAPSPE…PATSGITRVL (324 aa)) is uridylyltransferase. Positions 325 to 681 (SPDRFVEKQG…ARPSPIGDAL (357 aa)) are uridylyl-removing. An HD domain is found at 443–565 (VDQHILMVLR…VGNERYLTAL (123 aa)). 2 consecutive ACT domains span residues 682–761 (QVLV…PEPS) and 790–858 (ILSV…AIAV).

This sequence belongs to the GlnD family. Mg(2+) is required as a cofactor.

The enzyme catalyses [protein-PII]-L-tyrosine + UTP = [protein-PII]-uridylyl-L-tyrosine + diphosphate. The catalysed reaction is [protein-PII]-uridylyl-L-tyrosine + H2O = [protein-PII]-L-tyrosine + UMP + H(+). Uridylyltransferase (UTase) activity is inhibited by glutamine, while glutamine activates uridylyl-removing (UR) activity. Functionally, modifies, by uridylylation and deuridylylation, the PII regulatory proteins (GlnB and homologs), in response to the nitrogen status of the cell that GlnD senses through the glutamine level. Under low glutamine levels, catalyzes the conversion of the PII proteins and UTP to PII-UMP and PPi, while under higher glutamine levels, GlnD hydrolyzes PII-UMP to PII and UMP (deuridylylation). Thus, controls uridylylation state and activity of the PII proteins, and plays an important role in the regulation of nitrogen fixation and metabolism. The chain is Bifunctional uridylyltransferase/uridylyl-removing enzyme from Burkholderia lata (strain ATCC 17760 / DSM 23089 / LMG 22485 / NCIMB 9086 / R18194 / 383).